Consider the following 697-residue polypeptide: SPX domain-containing membrane protein At1g63010 (697 aa).

The region spanning 2–145 (VAFGKYLQRK…GYRFADYYVK (144 aa)) is the SPX domain. The next 6 membrane-spanning stretches (helical) occupy residues 247–267 (FNSLLLNLGNTFLYMVNTYII), 278–298 (LGAAATVCGVVIGSMAVAQVF), 315–335 (LVFSSIALFIGNLMYALAYDA), 337–356 (SIALLLLGRVCCGLGSARAV), 375–395 (AGFVSASALGMACGPALAGLL), and 411–431 (LPGWVMAVAWLFYLVWLCISF). Positions 439-459 (EDGEKNNRNETTSDRVESSRV) are disordered. 5 helical membrane-spanning segments follow: residues 513–533 (LLIYFMLKYSMEILLSESSVI), 544–564 (SVAIFLACLGLTVLPINILVG), 576–596 (ILLTSEIIVFLGILFSFNLFV), 604–624 (VISGLIMFVAAEVLEGVNLSL), and 670–690 (LLNATLLPSLVICIGSIVATC).

It belongs to the major facilitator superfamily.

It is found in the membrane. This is SPX domain-containing membrane protein At1g63010 from Arabidopsis thaliana (Mouse-ear cress).